The primary structure comprises 75 residues: Small ribosomal subunit protein bS18 (75 aa).

This sequence belongs to the bacterial ribosomal protein bS18 family. In terms of assembly, part of the 30S ribosomal subunit. Forms a tight heterodimer with protein bS6.

In terms of biological role, binds as a heterodimer with protein bS6 to the central domain of the 16S rRNA, where it helps stabilize the platform of the 30S subunit. This chain is Small ribosomal subunit protein bS18, found in Anaplasma marginale (strain St. Maries).